The chain runs to 166 residues: Interferon gamma (166 aa).

Residues 1–23 form the signal peptide; it reads MNYTTICLAFQLCVIFCSSGYYC. Residue glutamine 24 is modified to Pyrrolidone carboxylic acid. 3 N-linked (GlcNAc...) asparagine glycosylation sites follow: asparagine 39, asparagine 106, and asparagine 107.

The protein belongs to the type II (or gamma) interferon family. As to quaternary structure, homodimer. Interacts with IFNGR1 (via extracellular domain); this interaction promotes IFNGR1 dimerization.

The protein localises to the secreted. Type II interferon produced by immune cells such as T-cells and NK cells that plays crucial roles in antimicrobial, antiviral, and antitumor responses by activating effector immune cells and enhancing antigen presentation. Primarily signals through the JAK-STAT pathway after interaction with its receptor IFNGR1 to affect gene regulation. Upon IFNG binding, IFNGR1 intracellular domain opens out to allow association of downstream signaling components JAK2, JAK1 and STAT1, leading to STAT1 activation, nuclear translocation and transcription of IFNG-regulated genes. Many of the induced genes are transcription factors such as IRF1 that are able to further drive regulation of a next wave of transcription. Plays a role in class I antigen presentation pathway by inducing a replacement of catalytic proteasome subunits with immunoproteasome subunits. In turn, increases the quantity, quality, and repertoire of peptides for class I MHC loading. Increases the efficiency of peptide generation also by inducing the expression of activator PA28 that associates with the proteasome and alters its proteolytic cleavage preference. Up-regulates as well MHC II complexes on the cell surface by promoting expression of several key molecules such as cathepsins B/CTSB, H/CTSH, and L/CTSL. Participates in the regulation of hematopoietic stem cells during development and under homeostatic conditions by affecting their development, quiescence, and differentiation. This Mustela putorius furo (European domestic ferret) protein is Interferon gamma (IFNG).